The sequence spans 133 residues: Bacteriohemerythrin (133 aa).

Fe cation contacts are provided by H19, H56, E60, H75, H79, H115, and D120.

Belongs to the hemerythrin family. In terms of assembly, monomer.

Functionally, oxygen-binding protein. May be involved in a storage mechanism or for delivery to oxygen-requiring enzymes. The oxygen-binding site contains two iron atoms. This Campylobacter jejuni subsp. jejuni serotype O:6 (strain 81116 / NCTC 11828) protein is Bacteriohemerythrin.